We begin with the raw amino-acid sequence, 98 residues long: MKINQPAVAGTLESGDVMIRIAPLDTQDIDLQINSSVEKQFGDAIRTTILDVLARYNVRGVQLNVDDKGALDCILRARLEALLARASGIPALPWEDCQ.

S14 carries the O-(phosphoribosyl dephospho-coenzyme A)serine modification.

Belongs to the CitD family. Oligomer with a subunit composition of (alpha,beta,gamma)6.

The protein resides in the cytoplasm. Its function is as follows. Covalent carrier of the coenzyme of citrate lyase. The chain is Citrate lyase acyl carrier protein from Escherichia coli O127:H6 (strain E2348/69 / EPEC).